The following is a 326-amino-acid chain: Vacuolar protein sorting-associated protein 26A-A (326 aa).

Residues 306–326 (TNFHQRFEPQEPQASAEEPEI) are disordered. The span at 315-326 (QEPQASAEEPEI) shows a compositional bias: low complexity.

It belongs to the VPS26 family. Component of the heterotrimeric retromer cargo-selective complex (CSC) which is believed to associate with variable sorting nexins to form functionally distinct retromer complex variants.

Its subcellular location is the cytoplasm. It localises to the endosome membrane. It is found in the early endosome. In terms of biological role, acts as a component of the retromer cargo-selective complex (CSC). The CSC is believed to be the core functional component of retromer or respective retromer complex variants acting to prevent missorting of selected transmembrane cargo proteins into the lysosomal degradation pathway. Retromer mediates retrograde transport of cargo proteins from endosomes to the trans-Golgi network (TGN). This Xenopus laevis (African clawed frog) protein is Vacuolar protein sorting-associated protein 26A-A (vps26a-a).